Consider the following 1247-residue polypeptide: Catenin delta-2 (1247 aa).

3 disordered regions span residues 1–50 (MFAR…TTSA), 134–238 (SGIL…SAFH), and 256–309 (LPAP…KSYS). Ser-7 bears the Phosphoserine mark. Over residues 22-50 (PSASEKNSSLSPGLNTSNGDGSETETTSA) the composition is skewed to polar residues. Residues 49–84 (SAILASVKEQELQFERLTRELEAERQIVASQLERCK) adopt a coiled-coil conformation. The span at 149–160 (SLLSQSALQLNS) shows a compositional bias: low complexity. Positions 172-207 (YHSNQTLALGDTAPSQLPARSTQARAAGQSFSQGTT) are enriched in polar residues. Arg-209 carries the omega-N-methylarginine modification. Residues 218 to 228 (PAPPPPPPREP) are compositionally biased toward pro residues. Arg-261 carries the omega-N-methylarginine modification. A phosphoserine mark is found at Ser-264 and Ser-273. Residues 265-276 (PLTTTQGGSPTK) are compositionally biased toward polar residues. Residues Arg-279 and Arg-293 each carry the omega-N-methylarginine modification. A compositionally biased stretch (polar residues) spans 296 to 309 (SPKQSPSRLAKSYS). Phosphoserine occurs at positions 324, 357, 412, and 458. One copy of the ARM 1 repeat lies at 391 to 433 (GSRASYSSQHGHLAPELRALQSPEHHIDPIYEDRVYQKPPMRS). The interval 429 to 480 (PPMRSLSQSQGDPLPPAHTGTFRTSTAPSSPGVDSVPLQRTGSQHGPQNAAA) is disordered. A compositionally biased stretch (polar residues) spans 466–475 (LQRTGSQHGP). At Ser-511 the chain carries Phosphoserine. Tyr-513 bears the Phosphotyrosine mark. Residues 514–533 (SKSGPALPPEGTLARSPSID) form a disordered region. 8 ARM repeats span residues 537 to 576 (KDPR…HLCF), 579 to 618 (NKIK…NLVY), 623 to 663 (DDNK…NLSS), 679 to 721 (LTNA…NVSS), 725 to 770 (EARR…NLSY), 832 to 872 (PKGI…NLAA), 904 to 943 (VYIR…NMAL), and 997 to 1040 (MENA…SMWQ). Disordered stretches follow at residues 1064–1131 (TIER…HTSR) and 1152–1176 (APAE…RKDY). The span at 1072 to 1081 (PYSSSRTPSI) shows a compositional bias: polar residues. Phosphoserine is present on residues Ser-1087 and Ser-1098. The span at 1087-1100 (SPNNRSASAPASPR) shows a compositional bias: low complexity. The span at 1103-1112 (ISLKERKTDY) shows a compositional bias: basic and acidic residues.

Belongs to the beta-catenin family. As to quaternary structure, binds to E-cadherin at a juxtamembrane site within the cytoplasmic domain. Binds to PSEN1. Interacts with PDZD2. Interacts (via the extreme C-terminus) with FRMPD2 (via the PDZ 2 domain). Interacts with ZBTB33. Interacts with ARHGEF28. Interacts with CDK5. Interacts with CTNNB1. Interacts with GSK3A and GSK3B. Interacts with DNM2. Interacts with CCDC85B. Post-translationally, O-glycosylated. Phosphorylated by CDK5. Phosphorylated by GSK3B. As to expression, expressed in neurons and glial cells. Isoform 2 was found to be the most predominant isoform in various brain regions. Expressed at neuromuscular junctions.

It is found in the nucleus. The protein localises to the cell junction. The protein resides in the adherens junction. It localises to the cell projection. Its subcellular location is the dendrite. It is found in the perikaryon. Has a critical role in neuronal development, particularly in the formation and/or maintenance of dendritic spines and synapses. Involved in the regulation of canonical Wnt signaling. It probably acts on beta-catenin turnover, facilitating beta-catenin interaction with GSK3B, phosphorylation, ubiquitination and degradation. May be involved in neuronal cell adhesion and tissue morphogenesis and integrity by regulating adhesion molecules. Functions as a transcriptional activator when bound to ZBTB33. This is Catenin delta-2 (Ctnnd2) from Mus musculus (Mouse).